A 183-amino-acid chain; its full sequence is ATP-dependent protease subunit HslV (183 aa).

Thr7 is a catalytic residue. 3 residues coordinate Na(+): Gly162, Cys165, and Thr168.

This sequence belongs to the peptidase T1B family. HslV subfamily. In terms of assembly, a double ring-shaped homohexamer of HslV is capped on each side by a ring-shaped HslU homohexamer. The assembly of the HslU/HslV complex is dependent on binding of ATP.

The protein resides in the cytoplasm. The catalysed reaction is ATP-dependent cleavage of peptide bonds with broad specificity.. Its activity is regulated as follows. Allosterically activated by HslU binding. Its function is as follows. Protease subunit of a proteasome-like degradation complex believed to be a general protein degrading machinery. This Chromobacterium violaceum (strain ATCC 12472 / DSM 30191 / JCM 1249 / CCUG 213 / NBRC 12614 / NCIMB 9131 / NCTC 9757 / MK) protein is ATP-dependent protease subunit HslV.